We begin with the raw amino-acid sequence, 428 residues long: RNA-binding protein 34 (428 aa).

2 disordered regions span residues 1–106 and 127–152; these read MALR…KVKV and DLEE…TDGE. An N6-acetyllysine modification is found at Lys147. 2 consecutive RRM domains span residues 183-278 and 285-362; these read RTVF…LASE and RSVF…RSVN. Lys240 participates in a covalent cross-link: Glycyl lysine isopeptide (Lys-Gly) (interchain with G-Cter in SUMO2). Ser286 is modified (phosphoserine). The tract at residues 361 to 428 is disordered; that stretch reads VNKEKLKQQN…GQTKKPRKQK (68 aa). Positions 408 to 428 are enriched in basic residues; that stretch reads LMKKKKGQKKKGQTKKPRKQK.

Belongs to the RRM RBM34 family.

The protein resides in the nucleus. It localises to the nucleolus. The chain is RNA-binding protein 34 (Rbm34) from Rattus norvegicus (Rat).